We begin with the raw amino-acid sequence, 511 residues long: MKDNKIIIFDTTLRDGEQALGSSLGINQKLQIALALENLGVDVIEAGFPVSSQGDFKAVQKIASKVKNSTICALSRALDKDIDMAYEALKVAKHFRIHTFIATSTLHMQDKLKKDFDEILSMAKRAIIRARSYTDDVEFSCEDAGRTPIDNLCFMVENAIKAGAKTINIPDTVGYTLPSEFANIIKILFNKVPNIDKAIISVHCHNDLGVATGNSLSAILQGARQIECTINGLGERAGNCALEEVVMAIKTRKDYLKGFYTDIKCENIFKTSKLVSAITNESIPSHKAIVGSNAFSHSSGIHQDGVLKNRQTYEIISPSAIGIHENRMLMTARSGRAMIKTCLENLGYDENTYNLDDVYERFLRLADKKGQVYDYDLEALMFLSYENEEENEFVIEKLSVISGNIPTACVCMRIKEELKTEACTGNGPVEAVFNCIARITNLKPALKAYSINAKSSGVDAQGQVDVDLEFKGRKFHGKGISTDVIEASAQAFVSAYNAIYRSLKVEERKMA.

The 264-residue stretch at 6-269 (IIIFDTTLRD…YTDIKCENIF (264 aa)) folds into the Pyruvate carboxyltransferase domain. Residues D15, H203, H205, and N239 each coordinate Mn(2+). Positions 394–511 (VIEKLSVISG…SLKVEERKMA (118 aa)) are regulatory domain.

It belongs to the alpha-IPM synthase/homocitrate synthase family. LeuA type 1 subfamily. Homodimer. The cofactor is Mn(2+).

Its subcellular location is the cytoplasm. The enzyme catalyses 3-methyl-2-oxobutanoate + acetyl-CoA + H2O = (2S)-2-isopropylmalate + CoA + H(+). The protein operates within amino-acid biosynthesis; L-leucine biosynthesis; L-leucine from 3-methyl-2-oxobutanoate: step 1/4. In terms of biological role, catalyzes the condensation of the acetyl group of acetyl-CoA with 3-methyl-2-oxobutanoate (2-ketoisovalerate) to form 3-carboxy-3-hydroxy-4-methylpentanoate (2-isopropylmalate). This Campylobacter jejuni subsp. jejuni serotype O:23/36 (strain 81-176) protein is 2-isopropylmalate synthase.